Reading from the N-terminus, the 208-residue chain is 3-demethoxyubiquinol 3-hydroxylase (208 aa).

Glu57, Glu87, His90, Glu139, Glu171, and His174 together coordinate Fe cation.

Belongs to the COQ7 family. The cofactor is Fe cation.

The protein resides in the cell membrane. The enzyme catalyses a 5-methoxy-2-methyl-3-(all-trans-polyprenyl)benzene-1,4-diol + AH2 + O2 = a 3-demethylubiquinol + A + H2O. It participates in cofactor biosynthesis; ubiquinone biosynthesis. Functionally, catalyzes the hydroxylation of 2-nonaprenyl-3-methyl-6-methoxy-1,4-benzoquinol during ubiquinone biosynthesis. The polypeptide is 3-demethoxyubiquinol 3-hydroxylase (Burkholderia mallei (strain NCTC 10229)).